Here is a 160-residue protein sequence, read N- to C-terminus: Nucleotide-binding protein CBU_0114 (160 aa).

The protein belongs to the YajQ family.

In terms of biological role, nucleotide-binding protein. In Coxiella burnetii (strain RSA 493 / Nine Mile phase I), this protein is Nucleotide-binding protein CBU_0114.